We begin with the raw amino-acid sequence, 1001 residues long: 2-oxoglutarate dehydrogenase E1 component (1001 aa).

It belongs to the alpha-ketoglutarate dehydrogenase family. As to quaternary structure, homodimer. Part of the 2-oxoglutarate dehydrogenase (OGDH) complex composed of E1 (2-oxoglutarate dehydrogenase), E2 (dihydrolipoamide succinyltransferase) and E3 (dihydrolipoamide dehydrogenase); the complex contains multiple copies of the three enzymatic components (E1, E2 and E3). Requires thiamine diphosphate as cofactor.

The catalysed reaction is N(6)-[(R)-lipoyl]-L-lysyl-[protein] + 2-oxoglutarate + H(+) = N(6)-[(R)-S(8)-succinyldihydrolipoyl]-L-lysyl-[protein] + CO2. In terms of biological role, E1 component of the 2-oxoglutarate dehydrogenase (OGDH) complex which catalyzes the decarboxylation of 2-oxoglutarate, the first step in the conversion of 2-oxoglutarate to succinyl-CoA and CO(2). The chain is 2-oxoglutarate dehydrogenase E1 component from Brucella anthropi (strain ATCC 49188 / DSM 6882 / CCUG 24695 / JCM 21032 / LMG 3331 / NBRC 15819 / NCTC 12168 / Alc 37) (Ochrobactrum anthropi).